We begin with the raw amino-acid sequence, 98 residues long: Gas vesicle protein A (98 aa).

It belongs to the gas vesicle GvpA family. The gas vesicle shell is 2 nm thick and consists of a single layer of this protein. It forms helical ribs nearly perpendicular to the long axis of the vesicle.

The protein localises to the gas vesicle shell. Functionally, gas vesicles are hollow, gas filled proteinaceous nanostructures found in some microorganisms. During planktonic growth they allow positioning of the organism at a favorable depth for light or nutrient acquisition. GvpA forms the protein shell. The chain is Gas vesicle protein A from Koribacter versatilis (strain Ellin345).